A 257-amino-acid chain; its full sequence is Global transcriptional regulator CodY (257 aa).

The tract at residues 1-155 is GAF domain; sequence MSLLSKTREL…AATVIGMEIL (155 aa). Residues 203–222 constitute a DNA-binding region (H-T-H motif); sequence ASKVADGVGITRSVIVNALR.

It belongs to the CodY family.

It is found in the cytoplasm. Its function is as follows. DNA-binding global transcriptional regulator which is involved in the adaptive response to starvation and acts by directly or indirectly controlling the expression of numerous genes in response to nutrient availability. During rapid exponential growth, CodY is highly active and represses genes whose products allow adaptation to nutrient depletion. The sequence is that of Global transcriptional regulator CodY from Staphylococcus aureus (strain bovine RF122 / ET3-1).